The following is a 405-amino-acid chain: Acetylornithine/succinyldiaminopimelate aminotransferase (405 aa).

Pyridoxal 5'-phosphate is bound by residues 108-109 (GT) and F141. R144 contributes to the N(2)-acetyl-L-ornithine binding site. 226 to 229 (DEVQ) lines the pyridoxal 5'-phosphate pocket. N6-(pyridoxal phosphate)lysine is present on K255. Residue S283 coordinates N(2)-acetyl-L-ornithine. T284 is a binding site for pyridoxal 5'-phosphate.

Belongs to the class-III pyridoxal-phosphate-dependent aminotransferase family. ArgD subfamily. In terms of assembly, homodimer. Requires pyridoxal 5'-phosphate as cofactor.

The protein resides in the cytoplasm. The catalysed reaction is N(2)-acetyl-L-ornithine + 2-oxoglutarate = N-acetyl-L-glutamate 5-semialdehyde + L-glutamate. It carries out the reaction N-succinyl-(2S,6S)-2,6-diaminopimelate + 2-oxoglutarate = (S)-2-succinylamino-6-oxoheptanedioate + L-glutamate. The protein operates within amino-acid biosynthesis; L-arginine biosynthesis; N(2)-acetyl-L-ornithine from L-glutamate: step 4/4. It participates in amino-acid biosynthesis; L-lysine biosynthesis via DAP pathway; LL-2,6-diaminopimelate from (S)-tetrahydrodipicolinate (succinylase route): step 2/3. Its function is as follows. Involved in both the arginine and lysine biosynthetic pathways. In Salmonella typhi, this protein is Acetylornithine/succinyldiaminopimelate aminotransferase.